The following is a 520-amino-acid chain: Cyclic AMP-responsive element-binding protein 3-like protein 2 (520 aa).

The Cytoplasmic portion of the chain corresponds to 1 to 378 (MEVLESGEQG…CKLAGTQTGT (378 aa)). S93 carries the phosphoserine modification. Residue K178 forms a Glycyl lysine isopeptide (Lys-Gly) (interchain with G-Cter in SUMO2) linkage. Residue S191 is modified to Phosphoserine. Residues 195-264 (APVDHLHLPP…PHKLQGSGPL (70 aa)) form a disordered region. Composition is skewed to low complexity over residues 208–220 (SSHG…SLSP) and 234–255 (SPSR…LTAP). Positions 294-357 (ALKKIRRKIK…RTLLQQLQKL (64 aa)) constitute a bZIP domain. Positions 296–325 (KKIRRKIKNKISAQESRRKKKEYMDSLEKK) are basic motif. Residues 336 to 357 (LRKKVEVLENTNRTLLQQLQKL) are leucine-zipper. Residues 379–399 (CLMVVVLCFAVAFGSFFQGYG) form a helical; Signal-anchor for type II membrane protein membrane-spanning segment. Over 400-520 (PYPSATKMAL…ELDRRVNTTF (121 aa)) the chain is Lumenal. The S1P recognition motif lies at 427 to 430 (RNLL). 3 N-linked (GlcNAc...) asparagine glycosylation sites follow: N480, N504, and N517.

It belongs to the bZIP family. ATF subfamily. As to quaternary structure, binds DNA as a dimer. Post-translationally, upon ER stress, translocated to the Golgi apparatus, where it is processed by regulated intramembrane proteolysis (RIP) to release the cytosol-facing N-terminal transcription factor domain. The cleavage is performed sequentially by site-1 and site-2 proteases (S1P/MBTPS1 and S2P/MBTPS2). N-glycosylated. In terms of processing, ubiquitinated by HRD1/SYVN1; undergoes 'Lys-48'-linked ubiquitination, followed by rapid proteasomal degradation under normal conditions. Upon ER stress, SYVN1 E3 ubiquitin-protein ligase dissociates from its substrate, ubiquitination does not occur and CREB3L2 is stabilized.

It is found in the endoplasmic reticulum membrane. It localises to the nucleus. Its function is as follows. Transcription factor involved in unfolded protein response (UPR). In the absence of endoplasmic reticulum (ER) stress, inserted into ER membranes, with N-terminal DNA-binding and transcription activation domains oriented toward the cytosolic face of the membrane. In response to ER stress, transported to the Golgi, where it is cleaved in a site-specific manner by resident proteases S1P/MBTPS1 and S2P/MBTPS2. The released N-terminal cytosolic domain is translocated to the nucleus to effect transcription of specific target genes. Plays a critical role in chondrogenesis by activating the transcription of SEC23A, which promotes the transport and secretion of cartilage matrix proteins, and possibly that of ER biogenesis-related genes. In a neuroblastoma cell line, protects cells from ER stress-induced death. In vitro activates transcription of target genes via direct binding to the CRE site. The sequence is that of Cyclic AMP-responsive element-binding protein 3-like protein 2 (CREB3L2) from Pongo abelii (Sumatran orangutan).